Here is a 357-residue protein sequence, read N- to C-terminus: DNA integrity scanning protein DisA (357 aa).

One can recognise a DAC domain in the interval 8–146 (VKSMINILQL…GNLRYTLKDI (139 aa)). ATP contacts are provided by residues glycine 75, leucine 93, and 106–110 (MRHRT).

It belongs to the DisA family. As to quaternary structure, homooctamer. Mg(2+) serves as cofactor.

It catalyses the reaction 2 ATP = 3',3'-c-di-AMP + 2 diphosphate. Its function is as follows. Participates in a DNA-damage check-point that is active prior to asymmetric division when DNA is damaged. DisA forms globular foci that rapidly scan along the chromosomes during sporulation, searching for lesions. When a lesion is present, DisA pauses at the lesion site. This triggers a cellular response that culminates in a temporary block in sporulation initiation. Functionally, also has diadenylate cyclase activity, catalyzing the condensation of 2 ATP molecules into cyclic di-AMP (c-di-AMP). c-di-AMP acts as a signaling molecule that couples DNA integrity with progression of sporulation. The rise in c-di-AMP level generated by DisA while scanning the chromosome, operates as a positive signal that advances sporulation; upon encountering a lesion, the DisA focus arrests at the damaged site and halts c-di-AMP synthesis. The protein is DNA integrity scanning protein DisA of Bacillus cereus (strain AH187).